Here is a 318-residue protein sequence, read N- to C-terminus: Thymidylate synthase (318 aa).

Residues Arg25 and 180–181 each bind dUMP; that span reads RR. Cys200 (nucleophile) is an active-site residue. DUMP is bound by residues 220 to 223, Asn231, and 261 to 263; these read RSGD and HIY. Asp223 contributes to the (6R)-5,10-methylene-5,6,7,8-tetrahydrofolate binding site. Ala317 serves as a coordination point for (6R)-5,10-methylene-5,6,7,8-tetrahydrofolate.

This sequence belongs to the thymidylate synthase family. Bacterial-type ThyA subfamily. In terms of assembly, homodimer.

The protein localises to the cytoplasm. The catalysed reaction is dUMP + (6R)-5,10-methylene-5,6,7,8-tetrahydrofolate = 7,8-dihydrofolate + dTMP. It functions in the pathway pyrimidine metabolism; dTTP biosynthesis. Catalyzes the reductive methylation of 2'-deoxyuridine-5'-monophosphate (dUMP) to 2'-deoxythymidine-5'-monophosphate (dTMP) while utilizing 5,10-methylenetetrahydrofolate (mTHF) as the methyl donor and reductant in the reaction, yielding dihydrofolate (DHF) as a by-product. This enzymatic reaction provides an intracellular de novo source of dTMP, an essential precursor for DNA biosynthesis. The chain is Thymidylate synthase from Bacillus cereus (strain ATCC 14579 / DSM 31 / CCUG 7414 / JCM 2152 / NBRC 15305 / NCIMB 9373 / NCTC 2599 / NRRL B-3711).